The sequence spans 383 residues: tRNA(Met) cytidine acetate ligase (383 aa).

Residues 7-20 (IAEF…HEFL), Gly-101, Asn-153, and 178-179 (RI) each bind ATP.

Belongs to the TmcAL family.

The protein localises to the cytoplasm. It carries out the reaction cytidine(34) in elongator tRNA(Met) + acetate + ATP = N(4)-acetylcytidine(34) in elongator tRNA(Met) + AMP + diphosphate. Catalyzes the formation of N(4)-acetylcytidine (ac(4)C) at the wobble position of elongator tRNA(Met), using acetate and ATP as substrates. First activates an acetate ion to form acetyladenylate (Ac-AMP) and then transfers the acetyl group to tRNA to form ac(4)C34. This chain is tRNA(Met) cytidine acetate ligase, found in Lactobacillus acidophilus (strain ATCC 700396 / NCK56 / N2 / NCFM).